The primary structure comprises 282 residues: Probable endonuclease 4 (282 aa).

The Zn(2+) site is built by histidine 66, histidine 106, glutamate 143, aspartate 177, histidine 180, histidine 214, aspartate 227, histidine 229, and glutamate 259.

This sequence belongs to the AP endonuclease 2 family. It depends on Zn(2+) as a cofactor.

It catalyses the reaction Endonucleolytic cleavage to 5'-phosphooligonucleotide end-products.. Functionally, endonuclease IV plays a role in DNA repair. It cleaves phosphodiester bonds at apurinic or apyrimidinic (AP) sites, generating a 3'-hydroxyl group and a 5'-terminal sugar phosphate. This chain is Probable endonuclease 4, found in Nitratidesulfovibrio vulgaris (strain ATCC 29579 / DSM 644 / CCUG 34227 / NCIMB 8303 / VKM B-1760 / Hildenborough) (Desulfovibrio vulgaris).